The following is a 648-amino-acid chain: Macrolide export ATP-binding/permease protein MacB 1 (648 aa).

One can recognise an ABC transporter domain in the interval 6 to 244 (LQLSGIRRHF…PAPTTSRADT (239 aa)). ATP is bound at residue 42 to 49 (GASGSGKS). The disordered stretch occupies residues 222–248 (VVADRRREPTPPSPAPTTSRADTGGRG). Transmembrane regions (helical) follow at residues 273 to 293 (FLTM…VALG), 521 to 541 (LTLL…IGVM), 578 to 598 (LVCL…GVLF), and 613 to 633 (AVLM…FFPA).

The protein belongs to the ABC transporter superfamily. Macrolide exporter (TC 3.A.1.122) family. As to quaternary structure, homodimer. Part of the tripartite efflux system MacAB-TolC, which is composed of an inner membrane transporter, MacB, a periplasmic membrane fusion protein, MacA, and an outer membrane component, TolC. The complex forms a large protein conduit and can translocate molecules across both the inner and outer membranes. Interacts with MacA.

The protein resides in the cell inner membrane. Functionally, part of the tripartite efflux system MacAB-TolC. MacB is a non-canonical ABC transporter that contains transmembrane domains (TMD), which form a pore in the inner membrane, and an ATP-binding domain (NBD), which is responsible for energy generation. Confers resistance against macrolides. This chain is Macrolide export ATP-binding/permease protein MacB 1, found in Aeromonas hydrophila subsp. hydrophila (strain ATCC 7966 / DSM 30187 / BCRC 13018 / CCUG 14551 / JCM 1027 / KCTC 2358 / NCIMB 9240 / NCTC 8049).